We begin with the raw amino-acid sequence, 735 residues long: Phosphoribosylformylglycinamidine synthase subunit PurL (735 aa).

The active site involves His-48. Residues Tyr-51 and Lys-90 each coordinate ATP. Glu-92 contacts Mg(2+). Substrate-binding positions include 93 to 96 (SHNH) and Arg-115. His-94 (proton acceptor) is an active-site residue. Residue Asp-116 participates in Mg(2+) binding. Gln-239 is a binding site for substrate. Asp-267 serves as a coordination point for Mg(2+). 311 to 313 (ESQ) lines the substrate pocket. Asp-492 and Gly-529 together coordinate ATP. Asn-530 contacts Mg(2+). A substrate-binding site is contributed by Ser-532.

Belongs to the FGAMS family. As to quaternary structure, monomer. Part of the FGAM synthase complex composed of 1 PurL, 1 PurQ and 2 PurS subunits.

It localises to the cytoplasm. The catalysed reaction is N(2)-formyl-N(1)-(5-phospho-beta-D-ribosyl)glycinamide + L-glutamine + ATP + H2O = 2-formamido-N(1)-(5-O-phospho-beta-D-ribosyl)acetamidine + L-glutamate + ADP + phosphate + H(+). It participates in purine metabolism; IMP biosynthesis via de novo pathway; 5-amino-1-(5-phospho-D-ribosyl)imidazole from N(2)-formyl-N(1)-(5-phospho-D-ribosyl)glycinamide: step 1/2. Part of the phosphoribosylformylglycinamidine synthase complex involved in the purines biosynthetic pathway. Catalyzes the ATP-dependent conversion of formylglycinamide ribonucleotide (FGAR) and glutamine to yield formylglycinamidine ribonucleotide (FGAM) and glutamate. The FGAM synthase complex is composed of three subunits. PurQ produces an ammonia molecule by converting glutamine to glutamate. PurL transfers the ammonia molecule to FGAR to form FGAM in an ATP-dependent manner. PurS interacts with PurQ and PurL and is thought to assist in the transfer of the ammonia molecule from PurQ to PurL. In Bradyrhizobium sp. (strain BTAi1 / ATCC BAA-1182), this protein is Phosphoribosylformylglycinamidine synthase subunit PurL.